The chain runs to 363 residues: S-adenosylmethionine:tRNA ribosyltransferase-isomerase (363 aa).

It belongs to the QueA family. As to quaternary structure, monomer.

It localises to the cytoplasm. The enzyme catalyses 7-aminomethyl-7-carbaguanosine(34) in tRNA + S-adenosyl-L-methionine = epoxyqueuosine(34) in tRNA + adenine + L-methionine + 2 H(+). The protein operates within tRNA modification; tRNA-queuosine biosynthesis. Its function is as follows. Transfers and isomerizes the ribose moiety from AdoMet to the 7-aminomethyl group of 7-deazaguanine (preQ1-tRNA) to give epoxyqueuosine (oQ-tRNA). The sequence is that of S-adenosylmethionine:tRNA ribosyltransferase-isomerase from Pasteurella multocida (strain Pm70).